The chain runs to 480 residues: Cytochrome b-c1 complex subunit 1, mitochondrial (480 aa).

Residues 1–34 (MAASVVCRAATAGAQVLLRARRSPALLRTPALRS) constitute a mitochondrion transit peptide. Residues Lys-111 and Lys-138 each carry the N6-acetyllysine modification. Lys-163 bears the N6-acetyllysine; alternate mark. Lys-163 bears the N6-succinyllysine; alternate mark. Phosphoserine is present on Ser-212. Lys-248 carries the post-translational modification N6-acetyllysine.

It belongs to the peptidase M16 family. UQCRC1/QCR1 subfamily. Component of the ubiquinol-cytochrome c oxidoreductase (cytochrome b-c1 complex, complex III, CIII), a multisubunit enzyme composed of 11 subunits. The complex is composed of 3 respiratory subunits cytochrome b, cytochrome c1 and Rieske protein UQCRFS1, 2 core protein subunits UQCRC1/QCR1 and UQCRC2/QCR2, and 6 low-molecular weight protein subunits UQCRH/QCR6, UQCRB/QCR7, UQCRQ/QCR8, UQCR10/QCR9, UQCR11/QCR10 and subunit 9, the cleavage product of Rieske protein UQCRFS1. The complex exists as an obligatory dimer and forms supercomplexes (SCs) in the inner mitochondrial membrane with NADH-ubiquinone oxidoreductase (complex I, CI) and cytochrome c oxidase (complex IV, CIV), resulting in different assemblies (supercomplex SCI(1)III(2)IV(1) and megacomplex MCI(2)III(2)IV(2)). Interacts with UQCC6. Interacts with STMP1. Expressed in brain, including substantia nigra, striatum, cortex and cerebellum, and in spinal cord, heart, kidney, liver and muscle.

It is found in the mitochondrion inner membrane. In terms of biological role, component of the ubiquinol-cytochrome c oxidoreductase, a multisubunit transmembrane complex that is part of the mitochondrial electron transport chain which drives oxidative phosphorylation. The respiratory chain contains 3 multisubunit complexes succinate dehydrogenase (complex II, CII), ubiquinol-cytochrome c oxidoreductase (cytochrome b-c1 complex, complex III, CIII) and cytochrome c oxidase (complex IV, CIV), that cooperate to transfer electrons derived from NADH and succinate to molecular oxygen, creating an electrochemical gradient over the inner membrane that drives transmembrane transport and the ATP synthase. The cytochrome b-c1 complex catalyzes electron transfer from ubiquinol to cytochrome c, linking this redox reaction to translocation of protons across the mitochondrial inner membrane, with protons being carried across the membrane as hydrogens on the quinol. In the process called Q cycle, 2 protons are consumed from the matrix, 4 protons are released into the intermembrane space and 2 electrons are passed to cytochrome c. The 2 core subunits UQCRC1/QCR1 and UQCRC2/QCR2 are homologous to the 2 mitochondrial-processing peptidase (MPP) subunits beta-MPP and alpha-MPP respectively, and they seem to have preserved their MPP processing properties. May be involved in the in situ processing of UQCRFS1 into the mature Rieske protein and its mitochondrial targeting sequence (MTS)/subunit 9 when incorporated into complex III. Seems to play an important role in the maintenance of proper mitochondrial function in nigral dopaminergic neurons. This chain is Cytochrome b-c1 complex subunit 1, mitochondrial (UQCRC1), found in Homo sapiens (Human).